The following is a 197-amino-acid chain: Protein Hikeshi (197 aa).

Positions 18-55 (VAEDKFVFDLPDYENINHVVVFMLGTVPFPEGMGGSVY) are required for F-X-F-G repeats-nucleoporins recognition and nuclear import. Residues 124–134 (QTPVGNAAVSS) form a flexible linker region involved in nuclear import of HSP70 proteins region.

This sequence belongs to the OPI10 family. As to quaternary structure, forms an asymmetric homodimer; required for binding and nuclear import of HSP70 proteins. Interacts with ATP-bound HSP70 proteins. Interacts with NUP62 and NUP153 (via F-X-F-G repeats). Interacts with HSPA8.

The protein localises to the cytoplasm. Its subcellular location is the cytosol. It localises to the nucleus. In terms of biological role, acts as a specific nuclear import carrier for HSP70 proteins following heat-shock stress: acts by mediating the nucleoporin-dependent translocation of ATP-bound HSP70 proteins into the nucleus. HSP70 proteins import is required to protect cells from heat shock damages. Does not translocate ADP-bound HSP70 proteins into the nucleus. The polypeptide is Protein Hikeshi (Bos taurus (Bovine)).